Here is a 459-residue protein sequence, read N- to C-terminus: Xylose/arabinose-binding protein XacG (459 aa).

The chain crosses the membrane as a helical span at residues 19 to 36 (ALTVGAAAGIAGCTGGGG). Residues 27–68 (GIAGCTGGGGTETESTESGNGNGSGGSTDDTETSGSSSGESW) form a disordered region.

The protein belongs to the bacterial solute-binding protein 1 family. In terms of assembly, the complex is composed of two ATP-binding proteins (XacJ and XacK), two transmembrane proteins (XacH and XacI) and a solute-binding protein (XacG).

It is found in the cell membrane. In terms of biological role, part of the ABC transporter complex XacGHIJK involved in the uptake of xylose and arabinose. This Haloferax volcanii (strain ATCC 29605 / DSM 3757 / JCM 8879 / NBRC 14742 / NCIMB 2012 / VKM B-1768 / DS2) (Halobacterium volcanii) protein is Xylose/arabinose-binding protein XacG.